Here is a 1207-residue protein sequence, read N- to C-terminus: DNA-directed RNA polymerase subunit beta (1207 aa).

It belongs to the RNA polymerase beta chain family. The RNAP catalytic core consists of 2 alpha, 1 beta, 1 beta' and 1 omega subunit. When a sigma factor is associated with the core the holoenzyme is formed, which can initiate transcription.

The enzyme catalyses RNA(n) + a ribonucleoside 5'-triphosphate = RNA(n+1) + diphosphate. Functionally, DNA-dependent RNA polymerase catalyzes the transcription of DNA into RNA using the four ribonucleoside triphosphates as substrates. The chain is DNA-directed RNA polymerase subunit beta from Enterococcus faecalis (strain ATCC 700802 / V583).